The chain runs to 124 residues: Large ribosomal subunit protein eL31 (124 aa).

The protein belongs to the eukaryotic ribosomal protein eL31 family.

The sequence is that of Large ribosomal subunit protein eL31 (RpL31) from Aedes aegypti (Yellowfever mosquito).